A 218-amino-acid chain; its full sequence is 3,4-dihydroxy-2-butanone 4-phosphate synthase (218 aa).

D-ribulose 5-phosphate-binding positions include 38–39 (RE), Asp-43, 151–155 (RRGHT), and Glu-175. Glu-39 serves as a coordination point for Mg(2+). Residue His-154 participates in Mg(2+) binding.

Belongs to the DHBP synthase family. As to quaternary structure, homodimer. It depends on Mg(2+) as a cofactor. Mn(2+) serves as cofactor.

It carries out the reaction D-ribulose 5-phosphate = (2S)-2-hydroxy-3-oxobutyl phosphate + formate + H(+). It functions in the pathway cofactor biosynthesis; riboflavin biosynthesis; 2-hydroxy-3-oxobutyl phosphate from D-ribulose 5-phosphate: step 1/1. Catalyzes the conversion of D-ribulose 5-phosphate to formate and 3,4-dihydroxy-2-butanone 4-phosphate. The polypeptide is 3,4-dihydroxy-2-butanone 4-phosphate synthase (Vibrio atlanticus (strain LGP32) (Vibrio splendidus (strain Mel32))).